A 369-amino-acid polypeptide reads, in one-letter code: Chorismate synthase (369 aa).

Positions 48 and 54 each coordinate NADP(+). FMN-binding positions include 125 to 127 (RSS), 238 to 239 (NA), G278, 293 to 297 (KPTSS), and R319.

The protein belongs to the chorismate synthase family. Homotetramer. It depends on FMNH2 as a cofactor.

It carries out the reaction 5-O-(1-carboxyvinyl)-3-phosphoshikimate = chorismate + phosphate. It functions in the pathway metabolic intermediate biosynthesis; chorismate biosynthesis; chorismate from D-erythrose 4-phosphate and phosphoenolpyruvate: step 7/7. Its function is as follows. Catalyzes the anti-1,4-elimination of the C-3 phosphate and the C-6 proR hydrogen from 5-enolpyruvylshikimate-3-phosphate (EPSP) to yield chorismate, which is the branch point compound that serves as the starting substrate for the three terminal pathways of aromatic amino acid biosynthesis. This reaction introduces a second double bond into the aromatic ring system. The polypeptide is Chorismate synthase (Burkholderia thailandensis (strain ATCC 700388 / DSM 13276 / CCUG 48851 / CIP 106301 / E264)).